The following is an 805-amino-acid chain: Mitochondrial intermediate peptidase (805 aa).

Residues 1–25 constitute a mitochondrion transit peptide; sequence MIQPLVKASRPRLWVCSDCLLRRTL. His578 contacts Zn(2+). Residue Glu579 is part of the active site. His582 and His585 together coordinate Zn(2+).

This sequence belongs to the peptidase M3 family. Zn(2+) serves as cofactor.

It localises to the mitochondrion matrix. It catalyses the reaction Release of an N-terminal octapeptide as second stage of processing of some proteins imported into the mitochondrion.. Cleaves proteins, imported into the mitochondrion, to their mature size. While most mitochondrial precursor proteins are processed to the mature form in one step by mitochondrial processing peptidase (MPP), the sequential cleavage by MIP of an octapeptide after initial processing by MPP is a required step for a subgroup of nuclear-encoded precursor proteins destined for the matrix or the inner membrane. The sequence is that of Mitochondrial intermediate peptidase (oct-1) from Neurospora crassa (strain ATCC 24698 / 74-OR23-1A / CBS 708.71 / DSM 1257 / FGSC 987).